We begin with the raw amino-acid sequence, 356 residues long: Carbamoyl phosphate synthase small chain (356 aa).

Residues 1–160 are CPSase; that stretch reads MKGYLKLEDG…TKKPYRIAGI (160 aa). Ser-45, Gly-211, and Gly-213 together coordinate L-glutamine. Residues 163-350 form the Glutamine amidotransferase type-1 domain; sequence KLAFIDLGTK…MDIVMVYKRR (188 aa). Cys-238 serves as the catalytic Nucleophile. L-glutamine contacts are provided by Leu-239, Gln-242, Asn-280, Gly-282, and Tyr-283. Active-site residues include His-323 and Glu-325.

The protein belongs to the CarA family. As to quaternary structure, composed of two chains; the small (or glutamine) chain promotes the hydrolysis of glutamine to ammonia, which is used by the large (or ammonia) chain to synthesize carbamoyl phosphate. Tetramer of heterodimers (alpha,beta)4.

It catalyses the reaction hydrogencarbonate + L-glutamine + 2 ATP + H2O = carbamoyl phosphate + L-glutamate + 2 ADP + phosphate + 2 H(+). It carries out the reaction L-glutamine + H2O = L-glutamate + NH4(+). The protein operates within amino-acid biosynthesis; L-arginine biosynthesis; carbamoyl phosphate from bicarbonate: step 1/1. It participates in pyrimidine metabolism; UMP biosynthesis via de novo pathway; (S)-dihydroorotate from bicarbonate: step 1/3. Small subunit of the glutamine-dependent carbamoyl phosphate synthetase (CPSase). CPSase catalyzes the formation of carbamoyl phosphate from the ammonia moiety of glutamine, carbonate, and phosphate donated by ATP, constituting the first step of 2 biosynthetic pathways, one leading to arginine and/or urea and the other to pyrimidine nucleotides. The small subunit (glutamine amidotransferase) binds and cleaves glutamine to supply the large subunit with the substrate ammonia. The polypeptide is Carbamoyl phosphate synthase small chain (Caldanaerobacter subterraneus subsp. tengcongensis (strain DSM 15242 / JCM 11007 / NBRC 100824 / MB4) (Thermoanaerobacter tengcongensis)).